Consider the following 1969-residue polypeptide: TP53-binding protein 1 (1969 aa).

A disordered region spans residues 1–24; sequence MPGEQMDPTGSQLDSDFSQQDTPC. Polar residues predominate over residues 8-22; sequence PTGSQLDSDFSQQDT. A phosphoserine mark is found at serine 30, serine 68, and serine 73. The tract at residues 67-168 is disordered; that stretch reads VSNPEQSAVE…DSLAAEDSAS (102 aa). The segment covering 69–85 has biased composition (polar residues); sequence NPEQSAVEQGDSNSSFN. Residues 86 to 95 show a composition bias toward basic and acidic residues; that stretch reads EHLKEKKASD. The span at 101 to 110 shows a compositional bias: polar residues; sequence HLGTSGSISQ. Serine 109 carries the phosphoserine modification. The span at 135–148 shows a compositional bias: acidic residues; it reads PEEEKEEEELEEEK. Positions 158–168 are enriched in low complexity; that stretch reads ADSLAAEDSAS. 3 positions are modified to phosphoserine: serine 169, serine 179, and serine 181. Lysine 220 is covalently cross-linked (Glycyl lysine isopeptide (Lys-Gly) (interchain with G-Cter in SUMO1); alternate). Residue lysine 220 forms a Glycyl lysine isopeptide (Lys-Gly) (interchain with G-Cter in SUMO2); alternate linkage. Disordered regions lie at residues 254–337, 352–599, and 614–707; these read EQNL…VSTP, LVQE…CKGR, and DSGS…CPEA. 2 positions are modified to phosphoserine: serine 267 and serine 268. Basic and acidic residues predominate over residues 277–288; sequence ETKEQVPARELL. Residues 294 to 324 show a composition bias toward polar residues; it reads VQPSSEPEVSSTQEDLFDQSSKTASDGCSTP. At serine 297 the chain carries Phosphoserine. Threonine 305 is modified (phosphothreonine). A phosphoserine mark is found at serine 368, serine 382, and serine 397. Over residues 407–419 the composition is skewed to basic and acidic residues; that stretch reads QKLHDDEAMETEK. Residues 426–442 show a composition bias toward polar residues; sequence PAVSPQASTPVSRSTPV. Serine 429, serine 452, and serine 464 each carry phosphoserine. The segment covering 481-490 has biased composition (polar residues); sequence HSSSLTVECS. Residues 491 to 501 are compositionally biased toward basic and acidic residues; the sequence is KTSESEPKNFT. Phosphoserine occurs at positions 507, 518, 523, and 525. Residues 517-528 show a composition bias toward polar residues; it reads LSTSEYSQSSKM. Phosphothreonine is present on residues threonine 543 and threonine 548. Serine 552 and serine 579 each carry phosphoserine. Residues 566–582 show a composition bias toward polar residues; sequence VLVTPSQDDQVEMSQNV. Over residues 583–599 the composition is skewed to basic and acidic residues; the sequence is DKAKEDETEDRGDCKGR. Positions 614–634 are enriched in polar residues; sequence DSGSQAVPSPATRSEALSSVL. A phosphoserine mark is found at serine 622, serine 627, serine 631, and serine 632. Positions 640–649 are enriched in basic and acidic residues; the sequence is MDTKEHHPEE. Threonine 662 carries the phosphothreonine modification. Over residues 666–675 the composition is skewed to basic and acidic residues; sequence SHREEPKEEP. 4 positions are modified to phosphoserine: serine 684, serine 716, serine 719, and serine 763. Residues 754 to 870 form a disordered region; the sequence is KEPSPRADVS…DDKQLGPEGA (117 aa). A compositionally biased stretch (basic and acidic residues) spans 790-818; the sequence is AENRLDTPEEKRIECDGDSKAETTEKDAV. Phosphoserine is present on serine 822. Residues 830–839 show a composition bias toward basic and acidic residues; the sequence is VRDEPVRPDQ. At threonine 912 the chain carries Phosphothreonine. Residue lysine 920 forms a Glycyl lysine isopeptide (Lys-Gly) (interchain with G-Cter in SUMO2) linkage. Residues 927–1017 form a disordered region; the sequence is STPIGISNYP…GSTAIAEPVA (91 aa). Residues 935-949 are compositionally biased toward polar residues; that stretch reads YPESTIATSDVTSES. A compositionally biased stretch (basic and acidic residues) spans 961 to 975; sequence EKGDSESAPEMDGKL. Position 965 is a phosphoserine (serine 965). Residue lysine 974 forms a Glycyl lysine isopeptide (Lys-Gly) (interchain with G-Cter in SUMO2) linkage. Phosphoserine is present on serine 1018. Disordered stretches follow at residues 1034–1144, 1178–1231, and 1267–1478; these read QEKE…MDRP, GTST…PHGH, and TEET…DSSS. Over residues 1060 to 1074 the composition is skewed to basic and acidic residues; that stretch reads EEDKERPDVTPKLRQ. Serine 1075 and serine 1096 each carry phosphoserine. Low complexity predominate over residues 1099 to 1112; it reads SQQRASQEQRASQE. Serine 1115 is subject to Phosphoserine. Over residues 1178-1197 the composition is skewed to polar residues; the sequence is GTSTAEQNSGKQDATVQTER. Threonine 1211 is modified (phosphothreonine). Residues serine 1213 and serine 1216 each carry the phosphoserine modification. The span at 1269-1282 shows a compositional bias: acidic residues; it reads ETEEPIVECQECET. The segment covering 1295–1326 has biased composition (low complexity); sequence DLGDISSFSSKASSSHHTSSGTSLSAIHSSGS. Serine 1314 bears the Phosphoserine mark. Omega-N-methylarginine is present on arginine 1329. Position 1339 is a phosphoserine (serine 1339). Position 1352 is an omega-N-methylarginine (arginine 1352). Position 1359 is a phosphoserine (serine 1359). Lysine 1362 participates in a covalent cross-link: Glycyl lysine isopeptide (Lys-Gly) (interchain with G-Cter in SUMO2). Phosphoserine is present on serine 1365. Residues 1393 to 1400 carry the GAR motif; it reads RGRGRRGR. Residues serine 1423 and serine 1427 each carry the phosphoserine modification. Residue lysine 1431 forms a Glycyl lysine isopeptide (Lys-Gly) (interchain with G-Cter in SUMO1); alternate linkage. Lysine 1431 is covalently cross-linked (Glycyl lysine isopeptide (Lys-Gly) (interchain with G-Cter in SUMO2); alternate). 4 positions are modified to phosphoserine: serine 1457, serine 1459, serine 1470, and serine 1471. Residues 1469–1478 show a composition bias toward low complexity; sequence GSSDGLDSSS. The tract at residues 1481–1600 is tudor-like; sequence NSFVGLRVVA…NRLREQYGLG (120 aa). The segment at 1492 to 1520 is interaction with dimethylated histone H4; that stretch reads WSSNGYFYSGKITRDVGAGKYKLLFDDGY. Lysine 1560 is covalently cross-linked (Glycyl lysine isopeptide (Lys-Gly) (interchain with G-Cter in SUMO1); alternate). Lysine 1560 is covalently cross-linked (Glycyl lysine isopeptide (Lys-Gly) (interchain with G-Cter in SUMO2); alternate). The short motif at 1601–1628 is the UDR element; that stretch reads PYEAVTPLTKAADISLDNLVEGKRKRRS. Position 1606 is a phosphothreonine (threonine 1606). Serine 1615, serine 1628, and serine 1632 each carry phosphoserine. The disordered stretch occupies residues 1624-1715; it reads RKRRSNISSP…IGEPSVLEEP (92 aa). Low complexity predominate over residues 1631-1648; sequence SSPVTPTAASSSSTTPTR. 2 positions are modified to phosphothreonine: threonine 1635 and threonine 1645. A phosphoserine mark is found at serine 1653, serine 1670, and serine 1675. A Glycyl lysine isopeptide (Lys-Gly) (interchain with G-Cter in ubiquitin) cross-link involves residue lysine 1682. Phosphoserine is present on residues serine 1698 and serine 1756. 2 consecutive BRCT domains span residues 1749–1845 and 1861–1961; these read LDGP…NYLL and PREN…QHPK.

Homoligomer. Interacts with p53/TP53 (via the central domain). Interacts with DCLRE1C. Interacts with histone H2AX and this requires phosphorylation of H2AX on 'Ser-139'. Interacts with histone H4 that has been dimethylated at 'Lys-20' (H4K20me2). Has low affinity for histone H4 containing monomethylated 'Lys-20' (H4K20me1). Does not bind histone H4 containing unmethylated or trimethylated 'Lys-20' (H4K20me3). Has low affinity for histone H3 that has been dimethylated on 'Lys-79'. Has very low affinity for histone H3 that has been monomethylated on 'Lys-79' (in vitro). Does not bind unmethylated histone H3. Interacts with histone H2A monoubiquitinated at 'Lys-15' (H2AK15Ub). Interacts with PWWP3A/EXPAND1. Interacts with CHEK2; modulates CHEK2 phosphorylation at 'Thr-68' in response to infrared. Interacts with MSL1; this interaction may be required for MSL1 DNA repair activity, but not for histone acetyltransferase activity. Interacts (when phosphorylated by ATM) with RIF1. Interacts (via the Tudor-like domain) with NUDT16L1/TIRR; interaction masks the Tudor-like domain and prevents recruitment to chromatin. Interacts with PAXIP1. Interacts with IFI202A. Interacts with SHLD2. Interacts (when phosphorylated) with TOPBP1. Interacts with GFI1; promoting methylation by PRMT1. Interacts with (phosphorylated) DYNLL1; specifically binds DYNLL1 phosphorylated at 'Ser-88' and promotes its recruitment to double stand breaks (DSBs). In terms of processing, phosphorylated at basal level in the absence of DNA damage. Phosphorylated by ATM in response to DNA damage: phosphorylation at different sites promotes interaction with different set of proteins: phosphorylation at the N-terminus by ATM (residues from 11-181) promotes interaction with PAXIP1 and non-homologous end joining (NHEJ) of dysfunctional telomeres. Phosphorylation by ATM at residues that are located more C-terminus (residues 300-650) leads to promote interaction with RIF1. Interaction with RIF1 leads to disrupt interaction with NUDT16L1/TIRR. Phosphorylation at Thr-1606 and Ser-1615 in the UDR motif blocks interaction with H2AK15ub. Dephosphorylated by PPP4C. Hyperphosphorylation during mitosis correlates with its exclusion from chromatin and DNA lesions. Hyperphosphorylated in an ATR-dependent manner in response to DNA damage induced by UV irradiation. Dephosphorylated by PPP5C. Phosphorylation at Ser-368 and Thr-662 promotes interaction with TOPBP1. Phosphorylated by VRK1. Asymmetrically dimethylated on Arg residues by PRMT1. Methylation is required for DNA binding. Post-translationally, monoubiquitinated at Lys-1682 by MSL2 is reponse to DNA damage, leading to its stabilization.

The protein resides in the nucleus. It is found in the chromosome. It localises to the centromere. The protein localises to the kinetochore. Functionally, double-strand break (DSB) repair protein involved in response to DNA damage, telomere dynamics and class-switch recombination (CSR) during antibody genesis. Plays a key role in the repair of double-strand DNA breaks (DSBs) in response to DNA damage by promoting non-homologous end joining (NHEJ)-mediated repair of DSBs and specifically counteracting the function of the homologous recombination (HR) repair protein BRCA1. In response to DSBs, phosphorylation by ATM promotes interaction with RIF1 and dissociation from NUDT16L1/TIRR, leading to recruitment to DSBs sites. Recruited to DSBs sites by recognizing and binding histone H2A monoubiquitinated at 'Lys-15' (H2AK15Ub) and histone H4 dimethylated at 'Lys-20' (H4K20me2), two histone marks that are present at DSBs sites. Required for immunoglobulin class-switch recombination (CSR) during antibody genesis, a process that involves the generation of DNA DSBs. Participates in the repair and the orientation of the broken DNA ends during CSR. In contrast, it is not required for classic NHEJ and V(D)J recombination. Promotes NHEJ of dysfunctional telomeres. This is TP53-binding protein 1 from Mus musculus (Mouse).